A 295-amino-acid polypeptide reads, in one-letter code: 4-hydroxybenzoate octaprenyltransferase (295 aa).

8 helical membrane-spanning segments follow: residues 28–48 (AGWL…AGGF), 51–71 (WHLL…GCCV), 101–121 (ALGV…TTNA), 124–144 (IAWS…KRFV), 159–179 (IPMA…WLVL), 220–240 (VMAF…PFGL), 242–262 (WPLH…WRLI), and 274–294 (FTGN…GFAL).

This sequence belongs to the UbiA prenyltransferase family. It depends on Mg(2+) as a cofactor.

Its subcellular location is the cell inner membrane. It catalyses the reaction all-trans-octaprenyl diphosphate + 4-hydroxybenzoate = 4-hydroxy-3-(all-trans-octaprenyl)benzoate + diphosphate. It functions in the pathway cofactor biosynthesis; ubiquinone biosynthesis. In terms of biological role, catalyzes the prenylation of para-hydroxybenzoate (PHB) with an all-trans polyprenyl group. Mediates the second step in the final reaction sequence of ubiquinone-8 (UQ-8) biosynthesis, which is the condensation of the polyisoprenoid side chain with PHB, generating the first membrane-bound Q intermediate 3-octaprenyl-4-hydroxybenzoate. The polypeptide is 4-hydroxybenzoate octaprenyltransferase (Paracidovorax citrulli (strain AAC00-1) (Acidovorax citrulli)).